The following is a 338-amino-acid chain: MRIIGIETSCDETGIAIYDDEKGLLAHKLYSQVKLHADYGGVVPELASRDHVKKTIPLIKEALKEANLTSQDIDGVAYTAGPGLVGALLVGATIGRSIAYAWGVPAVPVHHMEGHLLAPMLEDNPPPFPFVAVLVSGGHSMMVEVKGIGEYKILGESIDDAAGEAFDKTAKLMGLDYPGGPLLSKLAEKGTPGRFKFPRPMTNVPGLDMSFSGLKTFTANTIAANGDDEQTRADIAYAFEEAVCATLAIKCKRALEQTGMKRIVIAGGVSANRRLRAELEKLAKKIGGEVYYPRTEFCTDNGAMIAYAGMQRLKNGEVADMSVEARPRWPIDQLTPIA.

Residues H111 and H115 each contribute to the Fe cation site. Residues 134-138 (LVSGG), D167, G180, and N272 each bind substrate. D300 provides a ligand contact to Fe cation.

The protein belongs to the KAE1 / TsaD family. It depends on Fe(2+) as a cofactor.

It localises to the cytoplasm. The enzyme catalyses L-threonylcarbamoyladenylate + adenosine(37) in tRNA = N(6)-L-threonylcarbamoyladenosine(37) in tRNA + AMP + H(+). Functionally, required for the formation of a threonylcarbamoyl group on adenosine at position 37 (t(6)A37) in tRNAs that read codons beginning with adenine. Is involved in the transfer of the threonylcarbamoyl moiety of threonylcarbamoyl-AMP (TC-AMP) to the N6 group of A37, together with TsaE and TsaB. TsaD likely plays a direct catalytic role in this reaction. In Vibrio parahaemolyticus serotype O3:K6 (strain RIMD 2210633), this protein is tRNA N6-adenosine threonylcarbamoyltransferase.